The primary structure comprises 49 residues: Osteocalcin (49 aa).

The 47-residue stretch at 1-47 folds into the Gla domain; sequence YLDHGLGAPAPYVDPLEPKREVCELNPDCDELADQMGFQEAYRRFYG. P9 is subject to 4-hydroxyproline. Positions 17, 21, 24, and 30 each coordinate Ca(2+). E17, E21, and E24 each carry 4-carboxyglutamate. Residues C23 and C29 are joined by a disulfide bond.

This sequence belongs to the osteocalcin/matrix Gla protein family. Post-translationally, gamma-carboxyglutamic acid residues are formed by vitamin K dependent carboxylation. These residues are essential for the binding of calcium.

The protein localises to the secreted. In terms of biological role, the carboxylated form is one of the main organic components of the bone matrix, which constitutes 1-2% of the total bone protein: it acts as a negative regulator of bone formation and is required to limit bone formation without impairing bone resorption or mineralization. The carboxylated form binds strongly to apatite and calcium. The uncarboxylated form acts as a hormone secreted by osteoblasts, which regulates different cellular processes, such as energy metabolism, male fertility and brain development. Regulates of energy metabolism by acting as a hormone favoring pancreatic beta-cell proliferation, insulin secretion and sensitivity and energy expenditure. Uncarboxylated osteocalcin hormone also promotes testosterone production in the testes: acts as a ligand for G protein-coupled receptor GPRC6A at the surface of Leydig cells, initiating a signaling response that promotes the expression of enzymes required for testosterone synthesis in a CREB-dependent manner. Also acts as a regulator of brain development: osteocalcin hormone crosses the blood-brain barrier and acts as a ligand for GPR158 on neurons, initiating a signaling response that prevents neuronal apoptosis in the hippocampus, favors the synthesis of all monoamine neurotransmitters and inhibits that of gamma-aminobutyric acid (GABA). Osteocalcin also crosses the placenta during pregnancy and maternal osteocalcin is required for fetal brain development. The protein is Osteocalcin of Lama guanicoe (Guanaco).